Consider the following 598-residue polypeptide: Tail knob protein gp9 (598 aa).

The protein belongs to the picovirinae distal tube protein family. As to quaternary structure, homohexamer; forms a hexameric tube structure with six flexible hydrophobic loops.

It is found in the virion. Its function is as follows. Distal (knob) tail protein that plugs the end of the tube before DNA ejection and forms a channel perforating the host membrane during ejection. In Bacillus subtilis (Bacteriophage B103), this protein is Tail knob protein gp9 (9).